We begin with the raw amino-acid sequence, 499 residues long: NAD(P)H-quinone oxidoreductase chain 4, chloroplastic (499 aa).

14 consecutive transmembrane segments (helical) span residues 4–24 (LPWL…IPLF), 31–51 (MIRW…TYIF), 87–107 (IGLI…AWPV), 113–130 (LLHF…GLFA), 134–154 (ILLF…LLSM), 167–187 (FLLY…SMGL), 211–231 (ILLY…FPLH), 242–262 (HYST…YGLI), 274–294 (SLFS…AALT), 305–325 (IAYS…SMTY), 330–350 (GAIL…FLVG), 386–406 (LALP…GVIT), 416–436 (IIIT…LLSM), and 462–482 (LFIL…PDLV).

The protein belongs to the complex I subunit 4 family.

It localises to the plastid. The protein localises to the chloroplast thylakoid membrane. It carries out the reaction a plastoquinone + NADH + (n+1) H(+)(in) = a plastoquinol + NAD(+) + n H(+)(out). The catalysed reaction is a plastoquinone + NADPH + (n+1) H(+)(in) = a plastoquinol + NADP(+) + n H(+)(out). The chain is NAD(P)H-quinone oxidoreductase chain 4, chloroplastic from Cryptomeria japonica (Japanese cedar).